A 346-amino-acid polypeptide reads, in one-letter code: D-amino-acid oxidase (346 aa).

The FAD site is built by G22, I24, T52, T53, S54, A58, A59, L60, and T187. D-proline-binding residues include Y227 and R284. Positions 227 and 284 each coordinate D-serine. FAD is bound by residues R284, G311, G312, G314, and T316. Residue R284 participates in D-dopa binding. G312 contributes to the D-proline binding site. G312 lines the D-serine pocket. A D-dopa-binding site is contributed by G312. Positions 344–346 match the Microbody targeting signal motif; that stretch reads SKL.

This sequence belongs to the DAMOX/DASOX family. FAD serves as cofactor.

Its subcellular location is the peroxisome matrix. The enzyme catalyses a D-alpha-amino acid + O2 + H2O = a 2-oxocarboxylate + H2O2 + NH4(+). It carries out the reaction D-serine + O2 + H2O = 3-hydroxypyruvate + H2O2 + NH4(+). It catalyses the reaction D-phenylalanine + O2 + H2O = 3-phenylpyruvate + H2O2 + NH4(+). The catalysed reaction is D-alanine + O2 + H2O = pyruvate + H2O2 + NH4(+). The enzyme catalyses D-arginine + O2 + H2O = 5-guanidino-2-oxopentanoate + H2O2 + NH4(+). It carries out the reaction D-methionine + O2 + H2O = 4-methylsulfanyl-2-oxobutanoate + H2O2 + NH4(+). It catalyses the reaction D-ornithine + O2 + H2O = 5-amino-2-oxopentanoate + H2O2 + NH4(+). The catalysed reaction is D-leucine + O2 + H2O = 4-methyl-2-oxopentanoate + H2O2 + NH4(+). The enzyme catalyses D-lysine + O2 + H2O = 6-amino-2-oxohexanoate + H2O2 + NH4(+). It carries out the reaction D-proline + O2 = 1-pyrroline-2-carboxylate + H2O2. It catalyses the reaction D-valine + O2 + H2O = 3-methyl-2-oxobutanoate + H2O2 + NH4(+). The catalysed reaction is D-histidine + O2 + H2O = 3-(imidazol-5-yl)pyruvate + H2O2 + NH4(+). Functionally, catalyzes the oxidative deamination of D-amino acids with broad substrate specificity. Has low in vitro and no in vivo activity on D-serine; primary D-serine degradation is performed by the D-serine dehydratase dsd. This Dictyostelium discoideum (Social amoeba) protein is D-amino-acid oxidase (ddo-1).